The following is a 273-amino-acid chain: 4-hydroxy-tetrahydrodipicolinate reductase (273 aa).

Residues 12–17 (GAGGRM) and glutamate 38 contribute to the NAD(+) site. Arginine 39 lines the NADP(+) pocket. NAD(+)-binding positions include 102 to 104 (GTT) and 126 to 129 (AANF). Histidine 159 serves as the catalytic Proton donor/acceptor. Histidine 160 lines the (S)-2,3,4,5-tetrahydrodipicolinate pocket. The active-site Proton donor is the lysine 163. Residue 169–170 (GT) coordinates (S)-2,3,4,5-tetrahydrodipicolinate.

The protein belongs to the DapB family. In terms of assembly, homotetramer.

Its subcellular location is the cytoplasm. It carries out the reaction (S)-2,3,4,5-tetrahydrodipicolinate + NAD(+) + H2O = (2S,4S)-4-hydroxy-2,3,4,5-tetrahydrodipicolinate + NADH + H(+). It catalyses the reaction (S)-2,3,4,5-tetrahydrodipicolinate + NADP(+) + H2O = (2S,4S)-4-hydroxy-2,3,4,5-tetrahydrodipicolinate + NADPH + H(+). It functions in the pathway amino-acid biosynthesis; L-lysine biosynthesis via DAP pathway; (S)-tetrahydrodipicolinate from L-aspartate: step 4/4. Catalyzes the conversion of 4-hydroxy-tetrahydrodipicolinate (HTPA) to tetrahydrodipicolinate. The protein is 4-hydroxy-tetrahydrodipicolinate reductase of Salmonella choleraesuis (strain SC-B67).